Here is a 457-residue protein sequence, read N- to C-terminus: Mannose-6-phosphate isomerase (457 aa).

Residues Gln-108, His-110, Glu-135, and His-292 each coordinate Zn(2+). Residue Arg-311 is part of the active site.

This sequence belongs to the mannose-6-phosphate isomerase type 1 family. Zn(2+) is required as a cofactor.

Its subcellular location is the cytoplasm. It carries out the reaction D-mannose 6-phosphate = D-fructose 6-phosphate. It participates in nucleotide-sugar biosynthesis; GDP-alpha-D-mannose biosynthesis; alpha-D-mannose 1-phosphate from D-fructose 6-phosphate: step 1/2. Functionally, involved in the synthesis of the GDP-mannose and dolichol-phosphate-mannose required for a number of critical mannosyl transfer reactions. This chain is Mannose-6-phosphate isomerase (pmi1), found in Aspergillus fumigatus (strain ATCC MYA-4609 / CBS 101355 / FGSC A1100 / Af293) (Neosartorya fumigata).